A 386-amino-acid chain; its full sequence is MTIIVDYRFPPAINAEKQAKTIAIGQTAGTWSERHSHRQEQLQQHLGEVVGIREEADGYKVARVRFPQINVENDIASLLTMIFGKYSMAGAGKVVGVYLPETYGTKAKVGITGIRQRLGVYDRPLVMAIFKPALGLSAQDHADILREVAFAGLDVIKDDEIMADLPVAPTHERLDCCRLVLEEVRQQTGRNVLYAVNVTGKADELQRKARLLVKHGANALLLNVLTYGFSVLEALASDPAIDVPIFAHPAFAGAMCAGSDTGLAYSVVLGTMMAHAGADAVLYPAAYGSLPFDPQEEGKIRDILRDRNVFPVPSAGIRPGIVPQVLGDYGRNVILNAGTGIMDHPSGPASGVRAFFEALARIEAGDSFDPANLPEGALKQAILEWG.

Residue lysine 85 is the Proton acceptor of the active site. Residues lysine 131, 157 to 160 (KDDE), histidine 248, glycine 316, and 338 to 339 (GT) each bind substrate. Residues lysine 157, aspartate 159, and glutamate 160 each contribute to the Mg(2+) site. Lysine 157 carries the post-translational modification N6-carboxylysine.

It belongs to the RuBisCO large chain family. Type IV subfamily. As to quaternary structure, homodimer. Mg(2+) is required as a cofactor.

The catalysed reaction is 5-methylsulfanyl-2,3-dioxopentyl phosphate = 2-hydroxy-5-methylsulfanyl-3-oxopent-1-enyl phosphate. It functions in the pathway amino-acid biosynthesis; L-methionine biosynthesis via salvage pathway; L-methionine from S-methyl-5-thio-alpha-D-ribose 1-phosphate: step 3/6. In terms of biological role, catalyzes the enolization of 2,3-diketo-5-methylthiopentyl-1-phosphate (DK-MTP-1-P) into 2-hydroxy-3-keto-5-methylthiopentenyl-1-phosphate (HK-MTPenyl-1-P). In Microcystis aeruginosa (strain NIES-843 / IAM M-2473), this protein is 2,3-diketo-5-methylthiopentyl-1-phosphate enolase.